Here is a 252-residue protein sequence, read N- to C-terminus: uncharacterized protein (252 aa).

Positions 1-20 (MIATLGNLIIPVIFVNYVAS) are cleaved as a signal peptide.

It belongs to the ascovirus HvAV ORF17 family.

This is an uncharacterized protein from Spodoptera frugiperda ascovirus 1a (SfAV-1a).